The sequence spans 1147 residues: Cellulose synthase-like protein D3 (1147 aa).

Disordered regions lie at residues 1–33 (MSTG…PAGQ) and 259–281 (KLGG…PFKP). Composition is skewed to gly residues over residues 14–29 (GGVG…GPRG) and 262–272 (GDGGGGGGGGP). The next 2 membrane-spanning stretches (helical) occupy residues 292–312 (VISP…FYLT) and 322–342 (ALWL…SWLL). Active-site residues include D422 and D847. The next 6 helical transmembrane spans lie at 929–949 (IFLL…FFIV), 954–974 (IAFL…GILE), 1001–1021 (LYAV…SFTL), 1045–1065 (LLIP…FAFA), 1075–1095 (WGKF…LNPF), and 1108–1128 (TIVF…WVAI).

Belongs to the glycosyltransferase 2 family. Plant cellulose synthase-like D subfamily.

Its subcellular location is the golgi apparatus membrane. Functionally, thought to be a Golgi-localized beta-glycan synthase that polymerize the backbones of noncellulosic polysaccharides (hemicelluloses) of plant cell wall. This Oryza sativa subsp. japonica (Rice) protein is Cellulose synthase-like protein D3 (CSLD3).